The sequence spans 458 residues: Argininosuccinate lyase (458 aa).

Belongs to the lyase 1 family. Argininosuccinate lyase subfamily.

The protein localises to the cytoplasm. The enzyme catalyses 2-(N(omega)-L-arginino)succinate = fumarate + L-arginine. It participates in amino-acid biosynthesis; L-arginine biosynthesis; L-arginine from L-ornithine and carbamoyl phosphate: step 3/3. This Salmonella typhimurium (strain LT2 / SGSC1412 / ATCC 700720) protein is Argininosuccinate lyase.